Reading from the N-terminus, the 299-residue chain is Nitrogenase iron protein (299 aa).

11 to 18 (GKGGIGKS) lines the ATP pocket. Residue C99 coordinates [4Fe-4S] cluster. R102 carries the ADP-ribosylarginine; by dinitrogenase reductase ADP-ribosyltransferase modification. C133 provides a ligand contact to [4Fe-4S] cluster.

The protein belongs to the NifH/BchL/ChlL family. In terms of assembly, homodimer. It depends on [4Fe-4S] cluster as a cofactor. The reversible ADP-ribosylation of Arg-102 inactivates the nitrogenase reductase and regulates nitrogenase activity.

The catalysed reaction is N2 + 8 reduced [2Fe-2S]-[ferredoxin] + 16 ATP + 16 H2O = H2 + 8 oxidized [2Fe-2S]-[ferredoxin] + 2 NH4(+) + 16 ADP + 16 phosphate + 6 H(+). The key enzymatic reactions in nitrogen fixation are catalyzed by the nitrogenase complex, which has 2 components: the iron protein and the molybdenum-iron protein. The sequence is that of Nitrogenase iron protein from Methylobacterium nodulans (strain LMG 21967 / CNCM I-2342 / ORS 2060).